The sequence spans 471 residues: DENN domain-containing protein 2D (471 aa).

One can recognise a uDENN domain in the interval 55 to 204 (EYLLVVSLKK…AFPAPGKTVT (150 aa)). The region spanning 226–359 (HLEHVDFSSL…LQDDILDSLG (134 aa)) is the cDENN domain. Residues 361-445 (GINELKTAEQ…QEAEKSKNPP (85 aa)) enclose the dDENN domain.

In bronchial mucosa, mainly expressed in ciliated and basal epithelial cells and weakly in alveolar cells (at protein level). Tends to be down-regulated in lung cancers, immortalized bronchial epithelial cell lines and precancerous lesions.

Its subcellular location is the cytoplasm. In terms of biological role, guanine nucleotide exchange factor (GEF) which may activate RAB9A and RAB9B. Promotes the exchange of GDP to GTP, converting inactive GDP-bound Rab proteins into their active GTP-bound form. This is DENN domain-containing protein 2D (DENND2D) from Homo sapiens (Human).